A 1219-amino-acid polypeptide reads, in one-letter code: FYVE, RhoGEF and PH domain-containing protein 5 (1219 aa).

Disordered stretches follow at residues 1–85 (MGSP…SCQI), 94–113 (EEDF…PTES), 201–227 (SDTQ…GQVP), and 310–367 (GRES…PSSV). Over residues 23–50 (EVFEEDSADAAEGEDQIEQEEPPNCDEE) the composition is skewed to acidic residues. A compositionally biased stretch (polar residues) spans 201–214 (SDTQAASGTLSGYS). Residues 319–337 (REPEGAGLDSHRVRRKEDN) are compositionally biased toward basic and acidic residues. Residues 346 to 356 (SSGSFSQRSHL) show a composition bias toward polar residues. Residues 357 to 367 (PSSGTSTPSSV) are compositionally biased toward low complexity. Phosphothreonine is present on T555. A compositionally biased stretch (low complexity) spans 586–599 (ESKQQSSEQEAESA). The disordered stretch occupies residues 586–644 (ESKQQSSEQEAESAYTEPYKVCPISAAPREDLTSDEEQGSSEEEDSASRDPSLSHKGEG). A compositionally biased stretch (acidic residues) spans 618–630 (TSDEEQGSSEEED). A compositionally biased stretch (basic and acidic residues) spans 631-644 (SASRDPSLSHKGEG). Residues 647-840 (RALVIAQELL…SKVTDRANES (194 aa)) form the DH domain. The PH 1 domain occupies 869 to 963 (EFLKEGTLMR…WHYCLSRALP (95 aa)). The FYVE-type zinc-finger motif lies at 998–1057 (VTHAMMCMNCGCDFSLTVRRHHCHACGKIVCRNCSRNKYPLKCLKNRMAKVCDGCFRELK). Positions 1004, 1007, 1020, 1023, 1028, 1031, 1049, and 1052 each coordinate Zn(2+). Residues 1120 to 1218 (GSAISGYLSR…WMEAMEDASV (99 aa)) enclose the PH 2 domain.

Expressed in highly vascularized tissues, such as lung, kidney and ovary.

The protein resides in the cytoplasm. The protein localises to the cytoskeleton. It localises to the cell projection. It is found in the ruffle membrane. Its subcellular location is the endoplasmic reticulum. The protein resides in the golgi apparatus. The protein localises to the early endosome. Its function is as follows. Activates CDC42, a member of the Ras-like family of Rho- and Rac proteins, by exchanging bound GDP for free GTP. Mediates VEGF-induced CDC42 activation. May regulate proangiogenic action of VEGF in vascular endothelial cells, including network formation, directional movement and proliferation. May play a role in regulating the actin cytoskeleton and cell shape. In Mus musculus (Mouse), this protein is FYVE, RhoGEF and PH domain-containing protein 5 (Fgd5).